We begin with the raw amino-acid sequence, 826 residues long: Golgin subfamily A member 6-like protein 25 (826 aa).

Disordered stretches follow at residues 1–100 (MWPQ…HQEA), 297–327 (QEQEEKIREQEEKMRRQEEMMWEKEEKMRRQ), 345–425 (MHEQ…EMWR), 502–534 (QEEMWREEEKMHEQEKIWEEEKRQEQEDKMWRQ), 547–646 (RQEE…EQEE), and 658–826 (QEEM…MQEH). Basic and acidic residues predominate over residues 31 to 52 (MSKETRQSKLAEAKEQLTDHHP). Composition is skewed to polar residues over residues 53-63 (QTNPSVGTAAS) and 71-83 (NNGTNPETTTSGG). Basic and acidic residues predominate over residues 86 to 100 (SPEDEQKASHQHQEA). Positions 157–822 (LEQALSAVAT…EVRLRQQEEK (666 aa)) form a coiled coil. Composition is skewed to basic and acidic residues over residues 658-678 (QEEMMQEQEEKMGEQEEKMWE) and 686-826 (QEEK…MQEH).

The protein belongs to the GOLGA6 family.

The chain is Golgin subfamily A member 6-like protein 25 from Homo sapiens (Human).